The following is a 353-amino-acid chain: Terpene synthase 1 (353 aa).

Residues 81–86 carry the DDxx(x)D/E motif motif; the sequence is DDAIDA. The NDxxSxxxD/E motif motif lies at 222-230; sequence NDLVSYEKE.

It belongs to the terpene synthase family.

The enzyme catalyses (2E,6E)-farnesyl diphosphate = (2S,3R,6S,9S)-(-)-protoillud-7-ene + diphosphate. Terpene synthase that converts its substrate farnesyl diphosphate (FPP) into the sesquiterpene protoillud-7-ene. In Tieghemostelium lacteum (Slime mold), this protein is Terpene synthase 1.